An 851-amino-acid chain; its full sequence is Molybdenum cofactor sulfurase (851 aa).

N6-(pyridoxal phosphate)lysine is present on K249. Residue C413 is part of the active site. Residues 665–844 (QYLRKFVMPG…LMVGDIVTPS (180 aa)) form the MOSC domain.

Belongs to the class-V pyridoxal-phosphate-dependent aminotransferase family. MOCOS subfamily. Pyridoxal 5'-phosphate serves as cofactor.

The enzyme catalyses Mo-molybdopterin + L-cysteine + AH2 = thio-Mo-molybdopterin + L-alanine + A + H2O. It participates in cofactor biosynthesis; molybdopterin biosynthesis. Sulfurates the molybdenum cofactor. Sulfation of molybdenum is essential for xanthine dehydrogenase (XDH) and aldehyde oxidase (ADO) enzymes in which molybdenum cofactor is liganded by 1 oxygen and 1 sulfur atom in active form. This Neosartorya fischeri (strain ATCC 1020 / DSM 3700 / CBS 544.65 / FGSC A1164 / JCM 1740 / NRRL 181 / WB 181) (Aspergillus fischerianus) protein is Molybdenum cofactor sulfurase.